The sequence spans 567 residues: Urease subunit alpha (567 aa).

A Urease domain is found at 129-567 (GGIDTHIHWI…LPMAQRYFLF (439 aa)). Positions 134, 136, and 217 each coordinate Ni(2+). Lys-217 is subject to N6-carboxylysine. Substrate is bound at residue His-219. Ni(2+) is bound by residues His-246 and His-272. The Proton donor role is filled by His-320. Residue Asp-360 participates in Ni(2+) binding.

The protein belongs to the metallo-dependent hydrolases superfamily. Urease alpha subunit family. In terms of assembly, heterotrimer of UreA (gamma), UreB (beta) and UreC (alpha) subunits. Three heterotrimers associate to form the active enzyme. Ni cation serves as cofactor. In terms of processing, carboxylation allows a single lysine to coordinate two nickel ions.

The protein localises to the cytoplasm. It catalyses the reaction urea + 2 H2O + H(+) = hydrogencarbonate + 2 NH4(+). It participates in nitrogen metabolism; urea degradation; CO(2) and NH(3) from urea (urease route): step 1/1. In Enterobacter sp. (strain 638), this protein is Urease subunit alpha.